The following is a 476-amino-acid chain: MKVSLPAFEKAKVLVVGDVMLDRYWVGPTGRISPEAPVPVVKINQVEDRPGGAANVALNIATLGGQVQLAGLVGEDDTAKALTLGVQALGVEPQWLNIADKPTITKLRVLSRNQQLIRLDFEESFDKQDSARLLKQSEALLDSVDVVVLSDYAKGAIDKPQDFIALARAKGVKVLVDPKGSDFSRYHGASLITPNMSEFEAVVGAVTSEADLLEKARGLLNKHQFDAILVTRSEKGMTLVTANAPELHIPTVAREVYDVTGAGDTVISALATSLAAGAELPQACAIANTAAGVVVGKLGTSTVSRIELIEALALHHGESGFGVVSEDQLAYALEQAKLRGERVVMTNGCFDILHAGHVSYLKQAKALGDRLIVAVNDDASVKRLKGEGRPVNQVDRRMAVLAGLAAVDWVVPFSEDTPQRIIARLLPDLLVKGGDYKVEDIAGGAEVIAAGGQVQVLGFEDGISTTAIIQNIMAKQ.

The segment at 1–319 is ribokinase; it reads MKVSLPAFEK…EALALHHGES (319 aa). 195 to 198 contributes to the ATP binding site; the sequence is NMSE. Residue Asp264 is part of the active site. The segment at 345–476 is cytidylyltransferase; that stretch reads MTNGCFDILH…AIIQNIMAKQ (132 aa).

This sequence in the N-terminal section; belongs to the carbohydrate kinase PfkB family. In the C-terminal section; belongs to the cytidylyltransferase family. Homodimer.

The enzyme catalyses D-glycero-beta-D-manno-heptose 7-phosphate + ATP = D-glycero-beta-D-manno-heptose 1,7-bisphosphate + ADP + H(+). The catalysed reaction is D-glycero-beta-D-manno-heptose 1-phosphate + ATP + H(+) = ADP-D-glycero-beta-D-manno-heptose + diphosphate. It participates in nucleotide-sugar biosynthesis; ADP-L-glycero-beta-D-manno-heptose biosynthesis; ADP-L-glycero-beta-D-manno-heptose from D-glycero-beta-D-manno-heptose 7-phosphate: step 1/4. It functions in the pathway nucleotide-sugar biosynthesis; ADP-L-glycero-beta-D-manno-heptose biosynthesis; ADP-L-glycero-beta-D-manno-heptose from D-glycero-beta-D-manno-heptose 7-phosphate: step 3/4. Catalyzes the phosphorylation of D-glycero-D-manno-heptose 7-phosphate at the C-1 position to selectively form D-glycero-beta-D-manno-heptose-1,7-bisphosphate. Its function is as follows. Catalyzes the ADP transfer from ATP to D-glycero-beta-D-manno-heptose 1-phosphate, yielding ADP-D-glycero-beta-D-manno-heptose. The chain is Bifunctional protein HldE from Shewanella sp. (strain ANA-3).